The primary structure comprises 87 residues: Kappa-3-bungarotoxin (87 aa).

A signal peptide spans 1 to 21; sequence MKTLLLSLVVVTIVCLDLGYT. 5 disulfides stabilise this stretch: cysteine 24/cysteine 42, cysteine 35/cysteine 63, cysteine 48/cysteine 52, cysteine 67/cysteine 79, and cysteine 80/cysteine 85.

The protein belongs to the three-finger toxin family. Long-chain subfamily. Kappa-neurotoxin sub-subfamily. Homodimer and heterodimer with kappa 2-bungarotoxin; non-covalently-linked. As to expression, expressed by the venom gland.

The protein localises to the secreted. Its function is as follows. Postsynaptic neurotoxin that binds and inhibits neuronal nicotinic acetylcholine receptors (nAChR) with high affinity (IC(50)&lt;100 nM). Is a selective, and slowly reversible antagonist of alpha-3/CHRNA3-containing and some alpha-4/CHRNA4-containing AChRs. The protein is Kappa-3-bungarotoxin of Bungarus multicinctus (Many-banded krait).